Consider the following 445-residue polypeptide: Rab GDP dissociation inhibitor beta (445 aa).

At Met1 the chain carries N-acetylmethionine. Lys57 carries the N6-succinyllysine modification. Lys112 is subject to N6-acetyllysine. Ser130 is subject to Phosphoserine. The residue at position 269 (Lys269) is an N6-acetyllysine. A Phosphoserine modification is found at Ser382.

It belongs to the Rab GDI family. In terms of assembly, interacts with RHOH. Interacts with the GDP-bound inactive forms of RAB3A, RAB3B, RAB3C, RAB5A, RAB5B, RAB5C, RAB8A, RAB8B, RAB10, RAB12, RAB35, and RAB43; binds RAB3D to a lesser extent. Interacts with DZIP1; this interaction negatively regulates the interaction of GDI2 with GDP-bound RAB8A.

It localises to the cytoplasm. The protein resides in the membrane. Its subcellular location is the golgi apparatus. The protein localises to the trans-Golgi network. Its function is as follows. GDP-dissociation inhibitor preventing the GDP to GTP exchange of most Rab proteins. By keeping these small GTPases in their inactive GDP-bound form regulates intracellular membrane trafficking. Negatively regulates protein transport to the cilium and ciliogenesis through the inhibition of RAB8A. The protein is Rab GDP dissociation inhibitor beta (GDI2) of Pongo abelii (Sumatran orangutan).